We begin with the raw amino-acid sequence, 469 residues long: Putative dipeptidase SAR1836 (469 aa).

His-84 contributes to the Zn(2+) binding site. Asp-86 is a catalytic residue. Asp-115 serves as a coordination point for Zn(2+). The active-site Proton acceptor is the Glu-149. The Zn(2+) site is built by Glu-150, Asp-173, and His-440.

Belongs to the peptidase M20A family. It depends on Zn(2+) as a cofactor.

This chain is Putative dipeptidase SAR1836, found in Staphylococcus aureus (strain MRSA252).